A 136-amino-acid polypeptide reads, in one-letter code: Ig heavy chain V region XIG8 (136 aa).

An N-terminal signal peptide occupies residues Gly1 to Ser18. The Ig-like domain maps to Gln19–Gln128.

The polypeptide is Ig heavy chain V region XIG8 (Xenopus laevis (African clawed frog)).